We begin with the raw amino-acid sequence, 118 residues long: uncharacterized protein (118 aa).

This is an uncharacterized protein from Invertebrate iridescent virus 6 (IIV-6).